The chain runs to 1026 residues: Multidrug resistance protein MdtC (1026 aa).

The next 11 membrane-spanning stretches (helical) occupy residues 15 to 35 (ILIA…LPVA), 333 to 353 (EVEE…FLFL), 360 to 380 (LIPA…MYLC), 387 to 407 (LSLM…IVVL), 431 to 451 (VGFT…PLLL), 463 to 483 (FAVT…TLTP), 528 to 548 (LVGV…IAIP), 853 to 873 (LILI…LYES), 897 to 917 (LFNA…IGIV), 953 to 973 (PIMM…LSGG), and 984 to 1004 (ITIV…TPVV).

It belongs to the resistance-nodulation-cell division (RND) (TC 2.A.6) family. MdtC subfamily. Part of a tripartite efflux system composed of MdtA, MdtB and MdtC. MdtC forms a heteromultimer with MdtB.

The protein localises to the cell inner membrane. The polypeptide is Multidrug resistance protein MdtC (Salmonella paratyphi A (strain ATCC 9150 / SARB42)).